We begin with the raw amino-acid sequence, 491 residues long: Glycogen synthase (491 aa).

Arginine 20 contributes to the ADP-alpha-D-glucose binding site.

The protein belongs to the glycosyltransferase 1 family. Bacterial/plant glycogen synthase subfamily.

It catalyses the reaction [(1-&gt;4)-alpha-D-glucosyl](n) + ADP-alpha-D-glucose = [(1-&gt;4)-alpha-D-glucosyl](n+1) + ADP + H(+). The protein operates within glycan biosynthesis; glycogen biosynthesis. Functionally, synthesizes alpha-1,4-glucan chains using ADP-glucose. This chain is Glycogen synthase, found in Prosthecochloris aestuarii (strain DSM 271 / SK 413).